Consider the following 880-residue polypeptide: MGIEKRKKMVWFWPEKHEGGVIKEAEDVAAEHISREGTMSHYSFSKGLLPPLGVGATARSSRHIKLRCFIVSPFDPRYRAWDWFLVILVLYTAWASPFEFGFLQTPRAPLSILDNVVNGFFAVDIVLTFFVAFLDKATYLLVDDPKRIAWRYTSTWLIFDVVSTVPYELFGSLLHNTIQGYGIFSMLRLWRLHRVSKCFARLEKDRKYNYFWIRCTKLLLVSLFVVHCGACFCYSIAAHYPDPSMTFMALAEANWKQKSLLIRYVTAMYWSITTFSTTGYGDIHGNNAEERAFILFYMIFNLGLLAYIIGNMTNLVVHVTSRTRNFRDTIQAASAFAQRNNLPLGLQEQMVAHLSLRYRTDSEGLQQQEIIDSLPKAIRSSISHYLFYEVVDKTYLFHGISNDLLFQLVSEMKAEYFPPKEDVILRNEAPSDFYIMVTGAVDIIARVNGVDQVVGEAQTGHVFGEVGVLCYRPQLFTVRTKRLSQLLRLNRTAFLNLVQANVGDGAIIMNNLLQHLKDSTDPVMKGILAETELMLAQGKMDLPLSLCFAAARGDDLLLHQLLKRGSNPNETDKNGRTALHIAASKGSQYCVVLLLEHGADPNIRDSEGSVPLWEAIIGRHEENAKLLSENGATLSFDTVGYFSCLAVGQNNLNALKDIVKYGGDISLSDVNGTTALHRAVSEGNLEIVQFLLEKGADMDKPDVYGWTARALAEHQGHEDIKALFYNQRPVERKTILVSGTPEIKPLMKHSSEPVMTHHHSREAMPPLARAVSQRRKLSNFKNSLFGIMSAAKTGDEGGASTRTGISEGVGGVYPARVTISGEASSSGKVVKLPDSLEELIEIGEKKLGFVATKILSREGAEIDDIRIIRDGDFLLLLKVS.

The Cytoplasmic segment spans residues 1–82 (MGIEKRKKMV…PFDPRYRAWD (82 aa)). The chain crosses the membrane as a helical span at residues 83–103 (WFLVILVLYTAWASPFEFGFL). The Extracellular segment spans residues 104 to 111 (QTPRAPLS). The chain crosses the membrane as a helical span at residues 112–132 (ILDNVVNGFFAVDIVLTFFVA). The Cytoplasmic segment spans residues 133–153 (FLDKATYLLVDDPKRIAWRYT). Residues 154–174 (STWLIFDVVSTVPYELFGSLL) form a helical membrane-spanning segment. The Extracellular portion of the chain corresponds to 175–182 (HNTIQGYG). Residues 183-203 (IFSMLRLWRLHRVSKCFARLE) form a helical; Voltage-sensor membrane-spanning segment. Over 204–217 (KDRKYNYFWIRCTK) the chain is Cytoplasmic. A helical membrane pass occupies residues 218-238 (LLLVSLFVVHCGACFCYSIAA). Residues 239-265 (HYPDPSMTFMALAEANWKQKSLLIRYV) lie on the Extracellular side of the membrane. The pore-forming intramembrane region spans 266–285 (TAMYWSITTFSTTGYGDIHG). The Extracellular segment spans residues 286–291 (NNAEER). Residues 292–312 (AFILFYMIFNLGLLAYIIGNM) form a helical membrane-spanning segment. Residues 313–880 (TNLVVHVTSR…GDFLLLLKVS (568 aa)) are Cytoplasmic-facing. 396 to 517 (LFHGISNDLL…IMNNLLQHLK (122 aa)) is a binding site for a nucleoside 3',5'-cyclic phosphate. 5 ANK repeats span residues 541–570 (DLPL…NPNE), 574–603 (NGRT…DPNI), 607–636 (EGSV…TLSF), 637–667 (DTVG…DISL), and 671–700 (NGTT…DMDK). Residues 809 to 880 (VGGVYPARVT…GDFLLLLKVS (72 aa)) enclose the KHA domain.

It belongs to the potassium channel family. Plant (TC 1.A.1.4) subfamily. In terms of assembly, the potassium channel is probably composed of a homo- or heterotetrameric complex of pore-forming subunits. In terms of tissue distribution, predominantly expressed in flowers.

The protein resides in the membrane. In terms of biological role, probable potassium channel. May interact with the cytoskeleton or with regulatory proteins. The protein is Probable potassium channel AKT5 (AKT5) of Arabidopsis thaliana (Mouse-ear cress).